The following is a 65-amino-acid chain: Large ribosomal subunit protein bL33 (65 aa).

The disordered stretch occupies residues 19–40; it reads TVPSSKKRSAGVSRYTTEKNRR.

The protein belongs to the bacterial ribosomal protein bL33 family.

This chain is Large ribosomal subunit protein bL33, found in Prochlorococcus marinus (strain NATL2A).